Reading from the N-terminus, the 575-residue chain is MHRFASGLASKARLARKGANQIASRSSWSRNYAAKDVKFGVEARGLMLKGVEDLADAVKVTMGPKGRNVVIEQSYGAPKVTKDGVTVAKSIEFKDKVKNVGASLVKQVANATNDVAGDGTTCATILTRAIFTEGCKSVAAGMNAMDLRRGISMAVDSVVTNLKSRARMISTSEEIAQVGTISANGEREIGELIAKAMEKVGKEGVITISDGKTLFNELEVVEGMKLDRGYISPYFITNQKNQKCELDDPLILIHEKKISSINSVVKVLELALKRQRPLLIVSEDVESDALATLILNKLRAGIKVCAIKAPGFGENRKAGLHDLAVLTGGQLITEELGMNLEKVDLDMLGSCKKITISKDDTVILDGAGDKKSIEERCEQIRSAIELSTSDYDKEKLQERLAKLSGGVAVLKIGGASEAEVGEKKDRVTDALNATKAAVEEGIVPGGGVALLYASKELDKLSTANFDQKIGVQIIQNALKTPVHTIASNAGVEGAVVVGKLLEQDNPDLGYDAAKGEYVDMIKAGIIDPLKVIRTALVDAASVSSLMTTTEAIVVELPKDEKEVPAMGGGMGGMDY.

The N-terminal 32 residues, 1-32, are a transit peptide targeting the mitochondrion; the sequence is MHRFASGLASKARLARKGANQIASRSSWSRNY.

It belongs to the chaperonin (HSP60) family.

It localises to the mitochondrion. Functionally, implicated in mitochondrial protein import and macromolecular assembly. May facilitate the correct folding of imported proteins. May also prevent misfolding and promote the refolding and proper assembly of unfolded polypeptides generated under stress conditions in the mitochondrial matrix. The protein is Chaperonin CPN60-2, mitochondrial (CPN60-2) of Cucurbita maxima (Pumpkin).